We begin with the raw amino-acid sequence, 334 residues long: Ketol-acid reductoisomerase (NADP(+)) (334 aa).

The 181-residue stretch at 1–181 (MTTVYYDQDV…GATRAGVIET (181 aa)) folds into the KARI N-terminal Rossmann domain. NADP(+)-binding positions include 25–28 (YGSQ), arginine 48, serine 52, and 82–85 (DEIQ). Histidine 107 is an active-site residue. Position 133 (glycine 133) interacts with NADP(+). Residues 182–327 (TFKEETETDL…RELREMMPFI (146 aa)) form the KARI C-terminal knotted domain. Aspartate 190, glutamate 194, glutamate 226, and glutamate 230 together coordinate Mg(2+). Residue serine 251 coordinates substrate.

Belongs to the ketol-acid reductoisomerase family. Requires Mg(2+) as cofactor.

It catalyses the reaction (2R)-2,3-dihydroxy-3-methylbutanoate + NADP(+) = (2S)-2-acetolactate + NADPH + H(+). The catalysed reaction is (2R,3R)-2,3-dihydroxy-3-methylpentanoate + NADP(+) = (S)-2-ethyl-2-hydroxy-3-oxobutanoate + NADPH + H(+). It participates in amino-acid biosynthesis; L-isoleucine biosynthesis; L-isoleucine from 2-oxobutanoate: step 2/4. The protein operates within amino-acid biosynthesis; L-valine biosynthesis; L-valine from pyruvate: step 2/4. Functionally, involved in the biosynthesis of branched-chain amino acids (BCAA). Catalyzes an alkyl-migration followed by a ketol-acid reduction of (S)-2-acetolactate (S2AL) to yield (R)-2,3-dihydroxy-isovalerate. In the isomerase reaction, S2AL is rearranged via a Mg-dependent methyl migration to produce 3-hydroxy-3-methyl-2-ketobutyrate (HMKB). In the reductase reaction, this 2-ketoacid undergoes a metal-dependent reduction by NADPH to yield (R)-2,3-dihydroxy-isovalerate. This chain is Ketol-acid reductoisomerase (NADP(+)), found in Staphylococcus aureus (strain Mu3 / ATCC 700698).